Reading from the N-terminus, the 1405-residue chain is MRPFLDDAKRRVDRKLSARRQSLSASRFLPSALPDRLKDNHDAQVDFTAPPGGSGSREGHLQYMQQSIFGMIAAVGSRSDFHARFDESSDSDGETGQRPRKESSVRKGTSVSVNTSSLDPSQRSSSQTDGNSEKDLGTRGRRHRRTISDHKLLRPFMSNSKHEPDPSTGDEMPTVSPPSRPRSATPRAAPILSRMVEAQAQFDLKASSTERSQSSLNETGAKGPRDASVSPLSTRLMDMFGFDKPEKVLVEYACSLLQSMLLQGYMYVTEGHICFYAYLPKKSTVAIKSGYLHKRGRKNPKYSRYWFSLKGDVLSYYADPSNLYFPSGHVDLRYGISASLGDPKEKGREPRDFQVTTDQRTYYFRADSAMSAKEWVKALQKVIFRTHNEGESVKISFPIESIIDIEESPMVDFAETFKIRVIEDDDSYAIDEYFFTFFNSGREAFEFLKILINDQSLKISSQHLSPQPDRSPRSDRTRKSRNRWSLTSGTSRAETQRKRSASTSHMSLAHDIVKSSPATRHQDSSDSILNSFEQATESSAAWQSITDAAESASQILNRSDVFQSPTIYGLDRRPSGRERRGRRNSDETARSPSTRVNVGTGQQIDELDRRTDGNTSGREARDTTSESDQYTQDPTKSFSGAPSLNELVKAGVYPLQRAAGLAEYLRTRSKQMSNLLASESMGYIEKVSGMWTGGRKHYGEAEDVLPDDQDVDPEDKEDGCNYGDRFRAHFALPPTEKLQATYFAYLHRVLPLYGKIYVSQKKLCFRSLIPGTRTKMILPLRDIENVEKEKGFRFGYHGLVIIIRGHEELFFEFRTSDARDDCAVTLHQHLEAVKFMAESGLLAEQEQNESEAAMTEHRMLQEARYYDYGENDLRPLNESSELHPIFDDPRASIVNFKPAESLRITCLTIGSRGDVQPYIALCKGLLAEGHRPKIATHAEFEPWVRKHGIDFAPVEGDPAELMRICVENGMFTYSFLKEASQKFRGWIDDLLSSAWASCQDSDLLIESPSAMAGIHIAEALRIPYFRAFTMPWSRTRAYPHAFAVPEHRMGGAYNYITYVMFDNVFWKAIAGQVNRWRKNELGLKATTLDKMQPNKVPFLYNYSPSVVPPPLDYPDWIRITGYWFLNEGSDWTPPTALSEFIHRAREDGKKIVYIGFGSIVVSDPSALTKTVIESVLKADVRCILSKGWSDRLGDPASAKPEVPLPSEIHQIQAAPHDWLFSHIDAAVHHGGAGTTGASLRAGVPTIIKPFFGDQFFFGSRVEDLGVGICMKKLNVSVFSRALWEATHSERMIIRAQDLGARIRSEDGVATAIQAIYRDLEYAKTLARQRSIASSTPFSPTPSAKTAAEQDADDDVEDSEEWTFVGDDTDVEMSRRLRDRAISDADMLPDRLLANSVPGDSGPGRN.

2 stretches are compositionally biased toward basic and acidic residues: residues 1–16 (MRPFLDDAKRRVDRKL) and 95–105 (TGQRPRKESSV). Disordered regions lie at residues 1–27 (MRPFLDDAKRRVDRKLSARRQSLSASR), 83–186 (ARFD…SATP), and 203–230 (DLKASSTERSQSSLNETGAKGPRDASVS). Polar residues predominate over residues 106-115 (RKGTSVSVNT). Low complexity predominate over residues 116 to 126 (SSLDPSQRSSS). The span at 206–218 (ASSTERSQSSLNE) shows a compositional bias: polar residues. A GRAM 1 domain is found at 246–285 (EKVLVEYACSLLQSMLLQGYMYVTEGHICFYAYLPKKSTV). In terms of domain architecture, PH spans 285 to 384 (VAIKSGYLHK…WVKALQKVIF (100 aa)). 2 disordered regions span residues 461–526 (SQHL…DSSD) and 566–642 (TIYG…SGAP). The segment covering 483–493 (RWSLTSGTSRA) has biased composition (polar residues). The span at 570 to 589 (LDRRPSGRERRGRRNSDETA) shows a compositional bias: basic and acidic residues. Polar residues predominate over residues 590–603 (RSPSTRVNVGTGQQ). Positions 606-624 (ELDRRTDGNTSGREARDTT) are enriched in basic and acidic residues. Positions 626-642 (ESDQYTQDPTKSFSGAP) are enriched in polar residues. The GRAM 2 domain occupies 724–790 (DRFRAHFALP…RDIENVEKEK (67 aa)). Residues serine 911, arginine 912, aspartate 914, alanine 1214, histidine 1216, histidine 1229, glycine 1233, threonine 1234, aspartate 1253, and glutamine 1254 each contribute to the UDP-alpha-D-glucose site. The segment at 1330–1367 (SIASSTPFSPTPSAKTAAEQDADDDVEDSEEWTFVGDD) is disordered. Positions 1332-1348 (ASSTPFSPTPSAKTAAE) are enriched in low complexity. Positions 1349-1367 (QDADDDVEDSEEWTFVGDD) are enriched in acidic residues.

The protein belongs to the glycosyltransferase 28 family.

The protein resides in the cytoplasm. It is found in the preautophagosomal structure membrane. It carries out the reaction a sterol + UDP-alpha-D-glucose = a sterol 3-beta-D-glucoside + UDP + H(+). The enzyme catalyses ergosterol + UDP-alpha-D-glucose = ergosteryl 3-beta-D-glucoside + UDP + H(+). In terms of biological role, sterol glycosyltransferase responsible for the glycosylation of ergosterol to form ergosterol-glucoside. The protein is Sterol 3-beta-glucosyltransferase of Aspergillus fumigatus (strain ATCC MYA-4609 / CBS 101355 / FGSC A1100 / Af293) (Neosartorya fumigata).